We begin with the raw amino-acid sequence, 437 residues long: ATP-dependent protease ATPase subunit HslU (437 aa).

Residues valine 18, 60–65 (GCGKTE), aspartate 250, glutamate 315, and arginine 387 each bind ATP.

This sequence belongs to the ClpX chaperone family. HslU subfamily. In terms of assembly, a double ring-shaped homohexamer of HslV is capped on each side by a ring-shaped HslU homohexamer. The assembly of the HslU/HslV complex is dependent on binding of ATP.

It is found in the cytoplasm. ATPase subunit of a proteasome-like degradation complex; this subunit has chaperone activity. The binding of ATP and its subsequent hydrolysis by HslU are essential for unfolding of protein substrates subsequently hydrolyzed by HslV. HslU recognizes the N-terminal part of its protein substrates and unfolds these before they are guided to HslV for hydrolysis. The chain is ATP-dependent protease ATPase subunit HslU from Methylobacterium radiotolerans (strain ATCC 27329 / DSM 1819 / JCM 2831 / NBRC 15690 / NCIMB 10815 / 0-1).